Consider the following 331-residue polypeptide: Rho GTPase-activating protein 5 (331 aa).

Residues 3–16 enclose the CRIB domain; it reads IGGPTNIRHVAHVT. Residues 48-225 enclose the Rho-GAP domain; that stretch reads VSTESMQLSY…LLKSLTEKTV (178 aa). The segment covering 227–251 has biased composition (basic and acidic residues); sequence EREASSSVVDRRCSKEAEDGEKEKD. Residues 227–331 are disordered; sequence EREASSSVVD…VQPPICSSNP (105 aa). Acidic residues predominate over residues 252–277; that stretch reads NEEEEEDEEEEEEEEDEDEDEEEEGD.

Expressed in differentiating xylem cells.

It is found in the cell membrane. Its function is as follows. Acts as a GTPase activator for the Rac-type GTPase by converting it to an inactive GDP-bound state. The polypeptide is Rho GTPase-activating protein 5 (ROPGAP5) (Arabidopsis thaliana (Mouse-ear cress)).